The sequence spans 191 residues: Penicillin-binding protein activator LpoB (191 aa).

The N-terminal stretch at 1 to 16 is a signal peptide; it reads MKRYLSLALAALVLTG. Cys17 is lipidated: N-palmitoyl cysteine. Residue Cys17 is the site of S-diacylglycerol cysteine attachment.

The protein belongs to the LpoB family. As to quaternary structure, interacts with PBP1b.

The protein resides in the cell outer membrane. In terms of biological role, regulator of peptidoglycan synthesis that is essential for the function of penicillin-binding protein 1B (PBP1b). The sequence is that of Penicillin-binding protein activator LpoB from Yersinia pestis (strain D182038).